The sequence spans 64 residues: DNA-binding protein 7a (64 aa).

An N6-methyllysine; partial mark is found at Lys5 and Lys7.

This sequence belongs to the 7 kDa DNA-binding/endoribonuclease P2 family. In terms of assembly, homodimer. Post-translationally, lys-5 and Lys-7 were found to be 60% monomethylated. ADP-ribosylated by endogenous proteins in vitro.

Can constrain negative DNA supercoils. May be involved in maintaining the integrity of the genome at high temperature. Has RNA endonuclease activity with a narrow substrate specificity; the cleavage products are 3'-phosphooligonucleotides. The sequence is that of DNA-binding protein 7a (sso7a1) from Saccharolobus solfataricus (strain ATCC 35092 / DSM 1617 / JCM 11322 / P2) (Sulfolobus solfataricus).